We begin with the raw amino-acid sequence, 331 residues long: Holliday junction branch migration complex subunit RuvB (331 aa).

Residues 1-178 (MRNSIFEQEE…FGITLRLDFY (178 aa)) form a large ATPase domain (RuvB-L) region. Residues Leu17, Arg18, Gly59, Lys62, Thr63, Thr64, 125 to 127 (EDY), Arg168, Tyr178, and Arg215 each bind ATP. A Mg(2+)-binding site is contributed by Thr63. The small ATPAse domain (RuvB-S) stretch occupies residues 179-249 (TVSELLQLLQ…FADLALNKME (71 aa)). The tract at residues 252–331 (QFGLDKLDYT…LSTINSARLP (80 aa)) is head domain (RuvB-H). Residues Arg307 and Arg312 each coordinate DNA.

This sequence belongs to the RuvB family. Homohexamer. Forms an RuvA(8)-RuvB(12)-Holliday junction (HJ) complex. HJ DNA is sandwiched between 2 RuvA tetramers; dsDNA enters through RuvA and exits via RuvB. An RuvB hexamer assembles on each DNA strand where it exits the tetramer. Each RuvB hexamer is contacted by two RuvA subunits (via domain III) on 2 adjacent RuvB subunits; this complex drives branch migration. In the full resolvosome a probable DNA-RuvA(4)-RuvB(12)-RuvC(2) complex forms which resolves the HJ.

The protein localises to the cytoplasm. It carries out the reaction ATP + H2O = ADP + phosphate + H(+). The RuvA-RuvB-RuvC complex processes Holliday junction (HJ) DNA during genetic recombination and DNA repair, while the RuvA-RuvB complex plays an important role in the rescue of blocked DNA replication forks via replication fork reversal (RFR). RuvA specifically binds to HJ cruciform DNA, conferring on it an open structure. The RuvB hexamer acts as an ATP-dependent pump, pulling dsDNA into and through the RuvAB complex. RuvB forms 2 homohexamers on either side of HJ DNA bound by 1 or 2 RuvA tetramers; 4 subunits per hexamer contact DNA at a time. Coordinated motions by a converter formed by DNA-disengaged RuvB subunits stimulates ATP hydrolysis and nucleotide exchange. Immobilization of the converter enables RuvB to convert the ATP-contained energy into a lever motion, pulling 2 nucleotides of DNA out of the RuvA tetramer per ATP hydrolyzed, thus driving DNA branch migration. The RuvB motors rotate together with the DNA substrate, which together with the progressing nucleotide cycle form the mechanistic basis for DNA recombination by continuous HJ branch migration. Branch migration allows RuvC to scan DNA until it finds its consensus sequence, where it cleaves and resolves cruciform DNA. The protein is Holliday junction branch migration complex subunit RuvB of Neorickettsia sennetsu (strain ATCC VR-367 / Miyayama) (Ehrlichia sennetsu).